We begin with the raw amino-acid sequence, 546 residues long: Chaperonin GroEL (546 aa).

ATP is bound by residues 30–33 (TLGP), lysine 51, 87–91 (DGTTT), glycine 415, 479–481 (NAA), and aspartate 495. Residues 527–546 (DESAAPAMPGGMGGMGDMGM) form a disordered region. Positions 536–546 (GGMGGMGDMGM) are enriched in gly residues.

This sequence belongs to the chaperonin (HSP60) family. As to quaternary structure, forms a cylinder of 14 subunits composed of two heptameric rings stacked back-to-back. Interacts with the co-chaperonin GroES.

Its subcellular location is the cytoplasm. It carries out the reaction ATP + H2O + a folded polypeptide = ADP + phosphate + an unfolded polypeptide.. Together with its co-chaperonin GroES, plays an essential role in assisting protein folding. The GroEL-GroES system forms a nano-cage that allows encapsulation of the non-native substrate proteins and provides a physical environment optimized to promote and accelerate protein folding. This Acidovorax sp. (strain JS42) protein is Chaperonin GroEL.